The following is a 130-amino-acid chain: Small ribosomal subunit protein uS8 (130 aa).

This sequence belongs to the universal ribosomal protein uS8 family. In terms of assembly, part of the 30S ribosomal subunit. Contacts proteins S5 and S12.

In terms of biological role, one of the primary rRNA binding proteins, it binds directly to 16S rRNA central domain where it helps coordinate assembly of the platform of the 30S subunit. The polypeptide is Small ribosomal subunit protein uS8 (Alteromonas mediterranea (strain DSM 17117 / CIP 110805 / LMG 28347 / Deep ecotype)).